Reading from the N-terminus, the 342-residue chain is Ketol-acid reductoisomerase (NADP(+)) (342 aa).

The KARI N-terminal Rossmann domain maps to 2-181; the sequence is VKVYYNGDIK…GGARAGVLET (180 aa). NADP(+) contacts are provided by residues 25–28, Arg48, Ser52, and 82–85; these read YGSQ and DEQQ. Residue His107 is part of the active site. Gly133 contributes to the NADP(+) binding site. The KARI C-terminal knotted domain occupies 182-327; the sequence is TFKEETETDL…RQLREMMPFV (146 aa). 4 residues coordinate Mg(2+): Asp190, Glu194, Glu226, and Glu230. Ser251 contacts substrate.

It belongs to the ketol-acid reductoisomerase family. Mg(2+) is required as a cofactor.

It catalyses the reaction (2R)-2,3-dihydroxy-3-methylbutanoate + NADP(+) = (2S)-2-acetolactate + NADPH + H(+). It carries out the reaction (2R,3R)-2,3-dihydroxy-3-methylpentanoate + NADP(+) = (S)-2-ethyl-2-hydroxy-3-oxobutanoate + NADPH + H(+). The protein operates within amino-acid biosynthesis; L-isoleucine biosynthesis; L-isoleucine from 2-oxobutanoate: step 2/4. It functions in the pathway amino-acid biosynthesis; L-valine biosynthesis; L-valine from pyruvate: step 2/4. Its function is as follows. Involved in the biosynthesis of branched-chain amino acids (BCAA). Catalyzes an alkyl-migration followed by a ketol-acid reduction of (S)-2-acetolactate (S2AL) to yield (R)-2,3-dihydroxy-isovalerate. In the isomerase reaction, S2AL is rearranged via a Mg-dependent methyl migration to produce 3-hydroxy-3-methyl-2-ketobutyrate (HMKB). In the reductase reaction, this 2-ketoacid undergoes a metal-dependent reduction by NADPH to yield (R)-2,3-dihydroxy-isovalerate. In Bacillus velezensis (strain DSM 23117 / BGSC 10A6 / LMG 26770 / FZB42) (Bacillus amyloliquefaciens subsp. plantarum), this protein is Ketol-acid reductoisomerase (NADP(+)).